Here is a 262-residue protein sequence, read N- to C-terminus: Pyridoxine 5'-phosphate synthase (262 aa).

Asn6 serves as a coordination point for 3-amino-2-oxopropyl phosphate. 1-deoxy-D-xylulose 5-phosphate is bound at residue 8-9; the sequence is DH. 3-amino-2-oxopropyl phosphate is bound at residue Arg17. The active-site Proton acceptor is His43. 1-deoxy-D-xylulose 5-phosphate contacts are provided by Arg45 and His50. Glu70 acts as the Proton acceptor in catalysis. Thr102 provides a ligand contact to 1-deoxy-D-xylulose 5-phosphate. His215 acts as the Proton donor in catalysis. 3-amino-2-oxopropyl phosphate contacts are provided by residues Gly216 and 237-238; that span reads GH.

It belongs to the PNP synthase family. Homooctamer; tetramer of dimers.

The protein localises to the cytoplasm. It catalyses the reaction 3-amino-2-oxopropyl phosphate + 1-deoxy-D-xylulose 5-phosphate = pyridoxine 5'-phosphate + phosphate + 2 H2O + H(+). Its pathway is cofactor biosynthesis; pyridoxine 5'-phosphate biosynthesis; pyridoxine 5'-phosphate from D-erythrose 4-phosphate: step 5/5. Catalyzes the complicated ring closure reaction between the two acyclic compounds 1-deoxy-D-xylulose-5-phosphate (DXP) and 3-amino-2-oxopropyl phosphate (1-amino-acetone-3-phosphate or AAP) to form pyridoxine 5'-phosphate (PNP) and inorganic phosphate. The protein is Pyridoxine 5'-phosphate synthase of Helicobacter pylori (strain Shi470).